The primary structure comprises 436 residues: D-aminoacyl-tRNA deacylase (436 aa).

It belongs to the DtdA deacylase family. Monomer. The cofactor is Zn(2+).

The enzyme catalyses a D-aminoacyl-tRNA + H2O = a tRNA + a D-alpha-amino acid + H(+). It catalyses the reaction glycyl-tRNA(Ala) + H2O = tRNA(Ala) + glycine + H(+). Functionally, D-aminoacyl-tRNA deacylase with broad substrate specificity. By recycling D-aminoacyl-tRNA to D-amino acids and free tRNA molecules, this enzyme counteracts the toxicity associated with the formation of D-aminoacyl-tRNA entities in vivo. The sequence is that of D-aminoacyl-tRNA deacylase from Methanoregula boonei (strain DSM 21154 / JCM 14090 / 6A8).